We begin with the raw amino-acid sequence, 121 residues long: Ribonuclease P protein component (121 aa).

Belongs to the RnpA family. In terms of assembly, consists of a catalytic RNA component (M1 or rnpB) and a protein subunit.

It carries out the reaction Endonucleolytic cleavage of RNA, removing 5'-extranucleotides from tRNA precursor.. Functionally, RNaseP catalyzes the removal of the 5'-leader sequence from pre-tRNA to produce the mature 5'-terminus. It can also cleave other RNA substrates such as 4.5S RNA. The protein component plays an auxiliary but essential role in vivo by binding to the 5'-leader sequence and broadening the substrate specificity of the ribozyme. The chain is Ribonuclease P protein component from Nitrosomonas eutropha (strain DSM 101675 / C91 / Nm57).